Consider the following 486-residue polypeptide: V-type proton ATPase subunit B1 (486 aa).

Gly-2 carries the N-acetylglycine modification.

This sequence belongs to the ATPase alpha/beta chains family. V-ATPase is a heteromultimeric enzyme composed of a peripheral catalytic V1 complex (components A to H) attached to an integral membrane V0 proton pore complex (components: a, c, c'', d and e).

The protein resides in the vacuole membrane. Its function is as follows. Non-catalytic subunit of the peripheral V1 complex of vacuolar ATPase. V-ATPase is responsible for acidifying a variety of intracellular compartments in eukaryotic cells. The sequence is that of V-type proton ATPase subunit B1 (VHA-B1) from Arabidopsis thaliana (Mouse-ear cress).